Reading from the N-terminus, the 381-residue chain is Flap endonuclease 1 (381 aa).

Residues 1–105 form an N-domain region; it reads MGIKGLNSII…HELDKRTSRR (105 aa). Aspartate 34 contacts Mg(2+). DNA is bound by residues arginine 47 and arginine 71. Mg(2+) contacts are provided by aspartate 87, glutamate 156, glutamate 158, aspartate 177, and aspartate 179. An I-domain region spans residues 120–251; sequence EKMKHERRLV…VTALKLMKEH (132 aa). Glutamate 156 is a DNA binding site. 2 residues coordinate DNA: glycine 229 and aspartate 231. Aspartate 231 contributes to the Mg(2+) binding site. Residues 338 to 346 are interaction with PCNA; sequence VQGRLDGFF.

This sequence belongs to the XPG/RAD2 endonuclease family. FEN1 subfamily. In terms of assembly, interacts with PCNA. Three molecules of FEN1 bind to one PCNA trimer with each molecule binding to one PCNA monomer. PCNA stimulates the nuclease activity without altering cleavage specificity. Mg(2+) is required as a cofactor. In terms of processing, phosphorylated. Phosphorylation upon DNA damage induces relocalization to the nuclear plasma.

The protein resides in the nucleus. The protein localises to the nucleolus. It is found in the nucleoplasm. Its subcellular location is the mitochondrion. In terms of biological role, structure-specific nuclease with 5'-flap endonuclease and 5'-3' exonuclease activities involved in DNA replication and repair. During DNA replication, cleaves the 5'-overhanging flap structure that is generated by displacement synthesis when DNA polymerase encounters the 5'-end of a downstream Okazaki fragment. It enters the flap from the 5'-end and then tracks to cleave the flap base, leaving a nick for ligation. Also involved in the long patch base excision repair (LP-BER) pathway, by cleaving within the apurinic/apyrimidinic (AP) site-terminated flap. Acts as a genome stabilization factor that prevents flaps from equilibrating into structures that lead to duplications and deletions. Also possesses 5'-3' exonuclease activity on nicked or gapped double-stranded DNA, and exhibits RNase H activity. Also involved in replication and repair of rDNA and in repairing mitochondrial DNA. This chain is Flap endonuclease 1, found in Candida glabrata (strain ATCC 2001 / BCRC 20586 / JCM 3761 / NBRC 0622 / NRRL Y-65 / CBS 138) (Yeast).